The chain runs to 211 residues: Ribosomal RNA small subunit methyltransferase G (211 aa).

S-adenosyl-L-methionine contacts are provided by residues Gly73, 126-127, and Arg142; that span reads IE.

This sequence belongs to the methyltransferase superfamily. RNA methyltransferase RsmG family.

The protein resides in the cytoplasm. The catalysed reaction is guanosine(527) in 16S rRNA + S-adenosyl-L-methionine = N(7)-methylguanosine(527) in 16S rRNA + S-adenosyl-L-homocysteine. Functionally, specifically methylates the N7 position of guanine in position 527 of 16S rRNA. The protein is Ribosomal RNA small subunit methyltransferase G of Methylorubrum extorquens (strain CM4 / NCIMB 13688) (Methylobacterium extorquens).